Reading from the N-terminus, the 245-residue chain is 1-(5-phosphoribosyl)-5-[(5-phosphoribosylamino)methylideneamino] imidazole-4-carboxamide isomerase (245 aa).

Residue D7 is the Proton acceptor of the active site. The active-site Proton donor is D129.

This sequence belongs to the HisA/HisF family.

It localises to the cytoplasm. The enzyme catalyses 1-(5-phospho-beta-D-ribosyl)-5-[(5-phospho-beta-D-ribosylamino)methylideneamino]imidazole-4-carboxamide = 5-[(5-phospho-1-deoxy-D-ribulos-1-ylimino)methylamino]-1-(5-phospho-beta-D-ribosyl)imidazole-4-carboxamide. It functions in the pathway amino-acid biosynthesis; L-histidine biosynthesis; L-histidine from 5-phospho-alpha-D-ribose 1-diphosphate: step 4/9. This Salmonella heidelberg (strain SL476) protein is 1-(5-phosphoribosyl)-5-[(5-phosphoribosylamino)methylideneamino] imidazole-4-carboxamide isomerase.